We begin with the raw amino-acid sequence, 224 residues long: Protein FAM3D (224 aa).

A signal peptide spans 1 to 25 (MRVSGVLRLLALIFAIVTTWMFIRS). 2 cysteine pairs are disulfide-bonded: Cys-55-Cys-83 and Cys-61-Cys-218. The GG-type lectin domain occupies 64 to 222 (NYFAFKICSG…LEMEGCMPPK (159 aa)). The N-linked (GlcNAc...) asparagine glycan is linked to Asn-107.

It belongs to the FAM3 family. Abundantly expressed in placenta and weakly expressed in small intestine.

The protein localises to the secreted. This is Protein FAM3D (FAM3D) from Homo sapiens (Human).